Here is a 997-residue protein sequence, read N- to C-terminus: DNA polymerase I (997 aa).

In terms of domain architecture, 5'-3' exonuclease spans 174–261 (VMPTQLLDLF…VPCVFSLEDS (88 aa)). The 162-residue stretch at 428 to 589 (VPDVSLHTES…LYHYLKLRLE (162 aa)) folds into the 3'-5' exonuclease domain.

It belongs to the DNA polymerase type-A family.

It catalyses the reaction DNA(n) + a 2'-deoxyribonucleoside 5'-triphosphate = DNA(n+1) + diphosphate. In addition to polymerase activity, this DNA polymerase exhibits 3'-5' and 5'-3' exonuclease activity. This is DNA polymerase I (polA) from Treponema pallidum (strain Nichols).